A 278-amino-acid chain; its full sequence is Pca operon regulatory protein (278 aa).

The 61-residue stretch at 31–91 (VAGISKGMAI…SDGHYFYLTP (61 aa)) folds into the HTH iclR-type domain. A DNA-binding region (H-T-H motif) is located at residues 53–72 (ITMAAEKTGMTRAAARRHLL). One can recognise an IclR-ED domain in the interval 106 to 278 (LPKISQPLLN…ETARELRNIL (173 aa)).

Activates transcription of the pca operon. In Acinetobacter baylyi (strain ATCC 33305 / BD413 / ADP1), this protein is Pca operon regulatory protein (pcaU).